We begin with the raw amino-acid sequence, 491 residues long: NADH-quinone oxidoreductase subunit N 1 (491 aa).

14 consecutive transmembrane segments (helical) span residues 9–29 (IAAPLLALAAGALLILLLDLL), 38–58 (PMYVAAVGAVLVAGWYLVPLW), 76–96 (FAAVYGLVLLGAALLAILLSF), 104–124 (SGYLALLLWAAMGMVLLGGAG), 126–146 (LMVIFLGIELLSLALYVMIAF), 161–181 (FVLGSVAAAFLIFGFALIYGA), 211–231 (VGVGLAIVGLAFKMALVPFHI), 246–266 (AFMAIGTKAAAFAAMARLLVA), 276–296 (FLLPLSILAFASMMLGATVGI), 304–324 (LMAYSGIANAGYLIMAIPGLG), 329–349 (SAAAYYLAAYGFATMGVFAVV), 375–395 (VGVCLAVLFFGLIGVPPTGGF), 410–432 (AWIVLTGLILSTGISAYVYLKVI), and 461–481 (VVLAIATAGTLVLGVLPGPVS).

Belongs to the complex I subunit 2 family. NDH-1 is composed of 14 different subunits. Subunits NuoA, H, J, K, L, M, N constitute the membrane sector of the complex.

It localises to the cell membrane. The catalysed reaction is a quinone + NADH + 5 H(+)(in) = a quinol + NAD(+) + 4 H(+)(out). NDH-1 shuttles electrons from NADH, via FMN and iron-sulfur (Fe-S) centers, to quinones in the respiratory chain. The immediate electron acceptor for the enzyme in this species is believed to be a menaquinone. Couples the redox reaction to proton translocation (for every two electrons transferred, four hydrogen ions are translocated across the cytoplasmic membrane), and thus conserves the redox energy in a proton gradient. In Symbiobacterium thermophilum (strain DSM 24528 / JCM 14929 / IAM 14863 / T), this protein is NADH-quinone oxidoreductase subunit N 1.